We begin with the raw amino-acid sequence, 330 residues long: Aspartate--ammonia ligase (330 aa).

The protein belongs to the class-II aminoacyl-tRNA synthetase family. AsnA subfamily.

The protein resides in the cytoplasm. The catalysed reaction is L-aspartate + NH4(+) + ATP = L-asparagine + AMP + diphosphate + H(+). It functions in the pathway amino-acid biosynthesis; L-asparagine biosynthesis; L-asparagine from L-aspartate (ammonia route): step 1/1. The chain is Aspartate--ammonia ligase from Haemophilus influenzae (strain PittGG).